The primary structure comprises 360 residues: D-xylose 1-dehydrogenase [NADP(+)] (360 aa).

The protein belongs to the Gfo/Idh/MocA family. In terms of assembly, homotretramer.

It carries out the reaction D-xylofuranose + NADP(+) = D-xylono-1,4-lactone + NADPH + H(+). In terms of biological role, NADP-dependent D-xylose dehydrogenase involved in the degradation of D-xylose, a major component of hemicelluloses such as xylan. In addition to D-xylose, oxidizes D-ribose at similar kinetic constants, whereas D-glucose is oxidized with about 70-fold lower catalytic efficiency. The polypeptide is D-xylose 1-dehydrogenase [NADP(+)] (gfo6) (Haloarcula marismortui (strain ATCC 43049 / DSM 3752 / JCM 8966 / VKM B-1809) (Halobacterium marismortui)).